The primary structure comprises 1104 residues: SWI/SNF complex subunit SMARCC1 (1104 aa).

The interval 27–301 (LAVYRRKDGG…PVSFRQRIST (275 aa)) is marR-like, BRCT and chromo domains module. The MarR-like domain maps to 37–163 (PASKFWESPD…IEKTLVQNNC (127 aa)). The BRCT; N-terminus domain maps to 167-210 (PNIYLIPDIDLKLANKLKDIIKRHQGTFTDEKSKASHHIYPYPS). Lys178 participates in a covalent cross-link: Glycyl lysine isopeptide (Lys-Gly) (interchain with G-Cter in SUMO2). The 29-residue stretch at 216–244 (EWLRPVMRRDKQVLVHWGFYPDSYDTWVH) folds into the Chromo domain. A BRCT; C-terminus domain is found at 260-284 (KPWKVHVKWILDTDVFNEWMNEEDY). A disordered region spans residues 295 to 445 (FRQRISTKNE…PGEDNVTEQT (151 aa)). Residues 301–317 (TKNEEPVRSPERRDRKA) show a composition bias toward basic and acidic residues. Phosphoserine is present on residues Ser309, Ser327, and Ser329. Thr334 carries the phosphothreonine modification. An N6-acetyllysine mark is found at Lys344 and Lys345. At Ser349 the chain carries Phosphoserine. N6-acetyllysine is present on Lys353. Position 356 is a phosphoserine (Ser356). Position 358 is an N6-acetyllysine; alternate (Lys358). Lys358 is covalently cross-linked (Glycyl lysine isopeptide (Lys-Gly) (interchain with G-Cter in SUMO2); alternate). A Phosphothreonine modification is found at Thr397. Positions 448–545 (IIIPSYASWF…YQVDPESRPM (98 aa)) constitute an SWIRM domain. Ser572 is subject to Phosphoserine. A Glycyl lysine isopeptide (Lys-Gly) (interchain with G-Cter in SUMO2) cross-link involves residue Lys591. The SANT domain occupies 617–668 (SAGREWTEQETLLLLEALEMYKDDWNKVSEHVGSRTQDECILHFLRLPIEDP). Lys738 is covalently cross-linked (Glycyl lysine isopeptide (Lys-Gly) (interchain with G-Cter in SUMO2)). The disordered stretch occupies residues 744–859 (ARASGKVDPT…DAGKKKVEHE (116 aa)). Ser775 is subject to Phosphoserine. The span at 775 to 784 (SEEEKMETDP) shows a compositional bias: acidic residues. Over residues 788–859 (QPEKAENKVE…DAGKKKVEHE (72 aa)) the composition is skewed to basic and acidic residues. Residue Lys795 forms a Glycyl lysine isopeptide (Lys-Gly) (interchain with G-Cter in SUMO2) linkage. Phosphoserine occurs at positions 821 and 824. Residues Lys828 and Lys855 each participate in a glycyl lysine isopeptide (Lys-Gly) (interchain with G-Cter in SUMO2) cross-link. Residues 909–945 (KLRHFEELETIMDREKEALEQQRQQLLTERQNFHMEQ) are a coiled coil. Position 947 is an N6-acetyllysine (Lys947). Disordered regions lie at residues 955-1021 (QQME…PGPG) and 1041-1104 (IHPT…SATP). The segment covering 956 to 973 (QMEQQQQHGQTPQQAHQH) has biased composition (low complexity). Composition is skewed to pro residues over residues 994–1017 (QQPP…PGQI) and 1048–1057 (PTPPGMPPMP). Position 1064 is an asymmetric dimethylarginine (Arg1064). The segment covering 1073–1104 (MYPPPPQQQQPPPPADGVPPPPAPGPPASATP) has biased composition (pro residues).

The protein belongs to the SMARCC family. Component of the multiprotein chromatin-remodeling complexes SWI/SNF: SWI/SNF-A (BAF), SWI/SNF-B (PBAF) and related complexes. The canonical complex contains a catalytic subunit (either SMARCA4/BRG1/BAF190A or SMARCA2/BRM/BAF190B) and at least SMARCE1, ACTL6A/BAF53, SMARCC1/BAF155, SMARCC2/BAF170, and SMARCB1/SNF5/BAF47. Other subunits specific to each of the complexes may also be present permitting several possible combinations developmentally and tissue specific. Component of the BAF complex, which includes at least actin (ACTB), ARID1A/BAF250A, ARID1B/BAF250B, SMARCA2/BRM, SMARCA4/BRG1, ACTL6A/BAF53, ACTL6B/BAF53B, SMARCE1/BAF57, SMARCC1/BAF155, SMARCC2/BAF170, SMARCB1/SNF5/INI1, and one or more SMARCD1/BAF60A, SMARCD2/BAF60B, or SMARCD3/BAF60C. In muscle cells, the BAF complex also contains DPF3. Component of neural progenitors-specific chromatin remodeling complex (npBAF complex) composed of at least, ARID1A/BAF250A or ARID1B/BAF250B, SMARCD1/BAF60A, SMARCD3/BAF60C, SMARCA2/BRM/BAF190B, SMARCA4/BRG1/BAF190A, SMARCB1/BAF47, SMARCC1/BAF155, SMARCE1/BAF57, SMARCC2/BAF170, PHF10/BAF45A, ACTL6A/BAF53A and actin. Component of neuron-specific chromatin remodeling complex (nBAF complex) composed of at least, ARID1A/BAF250A or ARID1B/BAF250B, SMARCD1/BAF60A, SMARCD3/BAF60C, SMARCA2/BRM/BAF190B, SMARCA4/BRG1/BAF190A, SMARCB1/BAF47, SMARCC1/BAF155, SMARCE1/BAF57, SMARCC2/BAF170, DPF1/BAF45B, DPF3/BAF45C, ACTL6B/BAF53B and actin. Component of the SWI/SNF-B (PBAF) chromatin remodeling complex, at least composed of SMARCA4/BRG1, SMARCB1/BAF47/SNF5, ACTL6A/BAF53A or ACTL6B/BAF53B, SMARCE1/BAF57, SMARCD1/BAF60A, SMARCD2/BAF60B, perhaps SMARCD3/BAF60C, SMARCC1/BAF155, SMARCC2/BAF170, PBRM1/BAF180, ARID2/BAF200 and actin. Component of SWI/SNF (GBAF) subcomplex, which includes at least BICRA or BICRAL (mutually exclusive), BRD9, SS18, SMARCA2/BRM, SMARCA4/BRG1/BAF190A, ACTL6A/BAF53, SMARCC1/BAF155, and SMARCD1/BAF60A. May also interact with the SIN3A histone deacetylase transcription repressor complex in conjunction with SMARCA2 and SMARCA4. The minimal complex composed of SMARCC1 and SMARCA4 seems to be able to associate with cyclin such as CCNE1 or transcription factors such as KLF1 or GATA1. Interacts with NR3C1 and SMARD1. Interacts with TRIP12; leading to disrupt interaction between TRIP12 and SMARCE1 and prevent SMARCE1 ubiquitination. Interacts with CEBPB (when not methylated). Interacts with KDM6B. Interacts with MKKS; the interaction takes place predominantly in the cytoplasm and may modulate SMARCC1 location. Interacts with DPF2. Interacts with PRDM1/BLIMP1. Interacts with DPF3a (isoform 2 of DPF3/BAF45C) and with HDGFL2 in a DPF3a-dependent manner. Highly expressed in adult brain, testis and thymus.

Its subcellular location is the nucleus. The protein localises to the cytoplasm. In terms of biological role, involved in transcriptional activation and repression of select genes by chromatin remodeling (alteration of DNA-nucleosome topology). Component of SWI/SNF chromatin remodeling complexes that carry out key enzymatic activities, changing chromatin structure by altering DNA-histone contacts within a nucleosome in an ATP-dependent manner. May stimulate the ATPase activity of the catalytic subunit of the complex. Belongs to the neural progenitors-specific chromatin remodeling complex (npBAF complex) and the neuron-specific chromatin remodeling complex (nBAF complex). During neural development a switch from a stem/progenitor to a postmitotic chromatin remodeling mechanism occurs as neurons exit the cell cycle and become committed to their adult state. The transition from proliferating neural stem/progenitor cells to postmitotic neurons requires a switch in subunit composition of the npBAF and nBAF complexes. As neural progenitors exit mitosis and differentiate into neurons, npBAF complexes which contain ACTL6A/BAF53A and PHF10/BAF45A, are exchanged for homologous alternative ACTL6B/BAF53B and DPF1/BAF45B or DPF3/BAF45C subunits in neuron-specific complexes (nBAF). The npBAF complex is essential for the self-renewal/proliferative capacity of the multipotent neural stem cells. The nBAF complex along with CREST plays a role regulating the activity of genes essential for dendrite growth. This Mus musculus (Mouse) protein is SWI/SNF complex subunit SMARCC1 (Smarcc1).